Here is a 61-residue protein sequence, read N- to C-terminus: Insect toxin LqhIT5 (61 aa).

Residues 1–61 (DGYIRGGDGC…EWKYETNTCG (61 aa)) enclose the LCN-type CS-alpha/beta domain. Intrachain disulfides connect cysteine 10–cysteine 60, cysteine 14–cysteine 35, cysteine 21–cysteine 42, and cysteine 25–cysteine 44.

Belongs to the long (4 C-C) scorpion toxin superfamily. Sodium channel inhibitor family. Beta subfamily. Expressed by the venom gland.

It is found in the secreted. Functionally, excitatory insect beta-toxins induce a spastic paralysis. They bind voltage-independently at site-4 of sodium channels (Nav) and shift the voltage of activation toward more negative potentials thereby affecting sodium channel activation and promoting spontaneous and repetitive firing. This toxin is active only on insects. It operates by inducing a fast contraction paralysis without depressant activity. It is more similar to the excitatory toxins in its mode of action and the depressant toxins in its primary structure. This is Insect toxin LqhIT5 from Leiurus hebraeus (Hebrew deathstalker scorpion).